A 494-amino-acid polypeptide reads, in one-letter code: Sucrose-6-phosphate hydrolase (494 aa).

Substrate is bound by residues 45–48 (LLND), Q64, 107–108 (YS), 168–169 (RD), and E223. D48 is a catalytic residue.

Belongs to the glycosyl hydrolase 32 family.

The enzyme catalyses Hydrolysis of terminal non-reducing beta-D-fructofuranoside residues in beta-D-fructofuranosides.. The protein operates within glycan biosynthesis; sucrose metabolism. The polypeptide is Sucrose-6-phosphate hydrolase (scrB) (Staphylococcus xylosus).